Here is a 369-residue protein sequence, read N- to C-terminus: Quinolinate synthase (369 aa).

Iminosuccinate-binding residues include His-47 and Ser-64. Cys-111 provides a ligand contact to [4Fe-4S] cluster. Iminosuccinate is bound by residues 142-144 and Ser-163; that span reads YVN. Cys-231 is a binding site for [4Fe-4S] cluster. Iminosuccinate contacts are provided by residues 257-259 and Thr-274; that span reads HPE. Residue Cys-321 coordinates [4Fe-4S] cluster.

Belongs to the quinolinate synthase family. Type 3 subfamily. [4Fe-4S] cluster serves as cofactor.

The protein localises to the cytoplasm. The catalysed reaction is iminosuccinate + dihydroxyacetone phosphate = quinolinate + phosphate + 2 H2O + H(+). Its pathway is cofactor biosynthesis; NAD(+) biosynthesis; quinolinate from iminoaspartate: step 1/1. In terms of biological role, catalyzes the condensation of iminoaspartate with dihydroxyacetone phosphate to form quinolinate. This Bacillus licheniformis (strain ATCC 14580 / DSM 13 / JCM 2505 / CCUG 7422 / NBRC 12200 / NCIMB 9375 / NCTC 10341 / NRRL NRS-1264 / Gibson 46) protein is Quinolinate synthase.